The following is a 153-amino-acid chain: Glucose-6-phosphate 1-dehydrogenase (153 aa).

The NADP(+) site is built by Arg21 and Lys120. Residue Lys120 participates in D-glucose 6-phosphate binding.

It belongs to the glucose-6-phosphate dehydrogenase family.

Its subcellular location is the cytoplasm. The protein localises to the cytosol. The catalysed reaction is D-glucose 6-phosphate + NADP(+) = 6-phospho-D-glucono-1,5-lactone + NADPH + H(+). Its pathway is carbohydrate degradation; pentose phosphate pathway; D-ribulose 5-phosphate from D-glucose 6-phosphate (oxidative stage): step 1/3. Functionally, cytosolic glucose-6-phosphate dehydrogenase that catalyzes the first and rate-limiting step of the oxidative branch within the pentose phosphate pathway/shunt, an alternative route to glycolysis for the dissimilation of carbohydrates and a major source of reducing power and metabolic intermediates for fatty acid and nucleic acid biosynthetic processes. The chain is Glucose-6-phosphate 1-dehydrogenase (ZW) from Culex pipiens (House mosquito).